We begin with the raw amino-acid sequence, 381 residues long: Putative acyl-CoA dehydrogenase YdbM (381 aa).

FAD-binding positions include 158–160 (FTT) and 337–341 (RIVGA).

The protein belongs to the acyl-CoA dehydrogenase family. FAD is required as a cofactor.

This Bacillus subtilis (strain 168) protein is Putative acyl-CoA dehydrogenase YdbM (ydbM).